We begin with the raw amino-acid sequence, 1383 residues long: DNA-directed RNA polymerase subunit beta (1383 aa).

Belongs to the RNA polymerase beta chain family. In terms of assembly, the RNAP catalytic core consists of 2 alpha, 1 beta, 1 beta' and 1 omega subunit. When a sigma factor is associated with the core the holoenzyme is formed, which can initiate transcription.

It catalyses the reaction RNA(n) + a ribonucleoside 5'-triphosphate = RNA(n+1) + diphosphate. Functionally, DNA-dependent RNA polymerase catalyzes the transcription of DNA into RNA using the four ribonucleoside triphosphates as substrates. In Anaplasma phagocytophilum (strain HZ), this protein is DNA-directed RNA polymerase subunit beta.